The following is a 191-amino-acid chain: Potassium-transporting ATPase KdpC subunit (191 aa).

A helical transmembrane segment spans residues 10–30 (ITLVFCVFFSVFYILVLWLFA).

This sequence belongs to the KdpC family. In terms of assembly, the system is composed of three essential subunits: KdpA, KdpB and KdpC.

The protein localises to the cell inner membrane. Functionally, part of the high-affinity ATP-driven potassium transport (or Kdp) system, which catalyzes the hydrolysis of ATP coupled with the electrogenic transport of potassium into the cytoplasm. This subunit acts as a catalytic chaperone that increases the ATP-binding affinity of the ATP-hydrolyzing subunit KdpB by the formation of a transient KdpB/KdpC/ATP ternary complex. The chain is Potassium-transporting ATPase KdpC subunit from Bacteroides fragilis (strain ATCC 25285 / DSM 2151 / CCUG 4856 / JCM 11019 / LMG 10263 / NCTC 9343 / Onslow / VPI 2553 / EN-2).